Reading from the N-terminus, the 413-residue chain is Branched-chain-amino-acid aminotransferase 3, chloroplastic (413 aa).

The transit peptide at 1–60 (MERAAILPSVNQNYLLCPSRAFSTRLHSSTRNLSPPSFASIKLQHSSSSVSSNGGISLTR) directs the protein to the chloroplast. Lys-259 is modified (N6-(pyridoxal phosphate)lysine).

Belongs to the class-IV pyridoxal-phosphate-dependent aminotransferase family. Pyridoxal 5'-phosphate is required as a cofactor. As to expression, expressed in the phloem cells.

The protein localises to the plastid. It localises to the chloroplast. The enzyme catalyses L-leucine + 2-oxoglutarate = 4-methyl-2-oxopentanoate + L-glutamate. It carries out the reaction L-isoleucine + 2-oxoglutarate = (S)-3-methyl-2-oxopentanoate + L-glutamate. It catalyses the reaction L-valine + 2-oxoglutarate = 3-methyl-2-oxobutanoate + L-glutamate. The catalysed reaction is a 2-oxocarboxylate + L-methionine = 4-methylsulfanyl-2-oxobutanoate + an L-alpha-amino acid. It participates in amino-acid biosynthesis; L-isoleucine biosynthesis; L-isoleucine from 2-oxobutanoate: step 4/4. It functions in the pathway amino-acid biosynthesis; L-leucine biosynthesis; L-leucine from 3-methyl-2-oxobutanoate: step 4/4. The protein operates within amino-acid biosynthesis; L-valine biosynthesis; L-valine from pyruvate: step 4/4. With respect to regulation, inhibited by Ser- or Thr-derived imine. Converts 2-oxo acids to branched-chain amino acids. Acts on leucine, isoleucine and valine. Also involved in methionine chain elongation cycle of aliphatic glucosinolate formation. Catalyzes the conversion of 5-methylthiopentyl-2-oxo and 6-methylthiohexyl-2-oxo acids to their respective Met derivatives, homomethionine and dihomo-methionine, respectively. This is Branched-chain-amino-acid aminotransferase 3, chloroplastic from Arabidopsis thaliana (Mouse-ear cress).